A 145-amino-acid chain; its full sequence is MLTAEEKAAVTGFWGKVKVDEVGAEALGRLLVVYPWTQRFFEHFGDLSSADAVMNNAKVKAHGKKVLDSFSNGMKHLDDLKGTFAQLSELHCDKLHVDPENFKLLGNVLVVVLARHHGSEFTPLLQAEFQKVVAGVANALAHRYH.

The 145-residue stretch at 1–145 folds into the Globin domain; that stretch reads MLTAEEKAAV…VANALAHRYH (145 aa). 2 residues coordinate heme b: H62 and H91.

Belongs to the globin family. In terms of assembly, heterotetramer of two alpha chains and two beta chains. Red blood cells.

In terms of biological role, involved in oxygen transport from the lung to the various peripheral tissues. The sequence is that of Hemoglobin subunit beta-A from Capra hircus (Goat).